Reading from the N-terminus, the 89-residue chain is Small ribosomal subunit protein uS15 (89 aa).

The protein belongs to the universal ribosomal protein uS15 family. As to quaternary structure, part of the 30S ribosomal subunit. Forms a bridge to the 50S subunit in the 70S ribosome, contacting the 23S rRNA.

In terms of biological role, one of the primary rRNA binding proteins, it binds directly to 16S rRNA where it helps nucleate assembly of the platform of the 30S subunit by binding and bridging several RNA helices of the 16S rRNA. Forms an intersubunit bridge (bridge B4) with the 23S rRNA of the 50S subunit in the ribosome. The polypeptide is Small ribosomal subunit protein uS15 (Buchnera aphidicola subsp. Cinara cedri (strain Cc)).